Reading from the N-terminus, the 269-residue chain is Formamidopyrimidine-DNA glycosylase (269 aa).

Pro-2 serves as the catalytic Schiff-base intermediate with DNA. The Proton donor role is filled by Glu-3. Residue Lys-57 is the Proton donor; for beta-elimination activity of the active site. DNA-binding residues include His-90, Arg-109, and Lys-150. The FPG-type zinc-finger motif lies at 235–269 (LVYGKAGEPCPECGEPLQELKIGQRNTFFCNECQQ). The active-site Proton donor; for delta-elimination activity is the Arg-259.

The protein belongs to the FPG family. In terms of assembly, monomer. Zn(2+) serves as cofactor.

The enzyme catalyses Hydrolysis of DNA containing ring-opened 7-methylguanine residues, releasing 2,6-diamino-4-hydroxy-5-(N-methyl)formamidopyrimidine.. It carries out the reaction 2'-deoxyribonucleotide-(2'-deoxyribose 5'-phosphate)-2'-deoxyribonucleotide-DNA = a 3'-end 2'-deoxyribonucleotide-(2,3-dehydro-2,3-deoxyribose 5'-phosphate)-DNA + a 5'-end 5'-phospho-2'-deoxyribonucleoside-DNA + H(+). Involved in base excision repair of DNA damaged by oxidation or by mutagenic agents. Acts as a DNA glycosylase that recognizes and removes damaged bases. Has a preference for oxidized purines, such as 7,8-dihydro-8-oxoguanine (8-oxoG). Has AP (apurinic/apyrimidinic) lyase activity and introduces nicks in the DNA strand. Cleaves the DNA backbone by beta-delta elimination to generate a single-strand break at the site of the removed base with both 3'- and 5'-phosphates. The sequence is that of Formamidopyrimidine-DNA glycosylase from Vibrio parahaemolyticus serotype O3:K6 (strain RIMD 2210633).